The sequence spans 37 residues: Large ribosomal subunit protein bL36 (37 aa).

This sequence belongs to the bacterial ribosomal protein bL36 family.

The protein is Large ribosomal subunit protein bL36 of Thermus thermophilus (strain ATCC BAA-163 / DSM 7039 / HB27).